Reading from the N-terminus, the 100-residue chain is MEIAVIGNKEFVLGFQLAGIKKTYSAENPEKLAETITKVLDDTNVGILVLQSTDLEQIPRRLQVIIENSVKPTIVTIGGQEAGLSLRERIKRSVGVDLWK.

The protein belongs to the V-ATPase F subunit family. Has multiple subunits with at least A(3), B(3), C, D, E, F, H, I and proteolipid K(x).

It is found in the cell membrane. In terms of biological role, component of the A-type ATP synthase that produces ATP from ADP in the presence of a proton gradient across the membrane. This Methanocorpusculum labreanum (strain ATCC 43576 / DSM 4855 / Z) protein is A-type ATP synthase subunit F.